The primary structure comprises 148 residues: Lysozyme C (148 aa).

The first 18 residues, 1-18 (MKALIILGLVLLSVTVQG), serve as a signal peptide directing secretion. In terms of domain architecture, C-type lysozyme spans 19–148 (KIFERCELAR…VSQYVKGCGV (130 aa)). 4 cysteine pairs are disulfide-bonded: cysteine 24-cysteine 146, cysteine 48-cysteine 134, cysteine 83-cysteine 99, and cysteine 95-cysteine 113. Catalysis depends on residues glutamate 53 and aspartate 71.

Belongs to the glycosyl hydrolase 22 family. Monomer.

The protein resides in the secreted. The enzyme catalyses Hydrolysis of (1-&gt;4)-beta-linkages between N-acetylmuramic acid and N-acetyl-D-glucosamine residues in a peptidoglycan and between N-acetyl-D-glucosamine residues in chitodextrins.. Lysozymes have primarily a bacteriolytic function; those in tissues and body fluids are associated with the monocyte-macrophage system and enhance the activity of immunoagents. The polypeptide is Lysozyme C (LYZ) (Nasalis larvatus (Proboscis monkey)).